An 89-amino-acid chain; its full sequence is Putative defensin-like protein 230 (89 aa).

The N-terminal stretch at 1–26 (MRSVIWFIVSYTLMLLVLRGGKEVEA) is a signal peptide. 4 disulfide bridges follow: C30–C84, C40–C65, C48–C78, and C63–C80.

Belongs to the DEFL family.

The protein localises to the secreted. In Arabidopsis thaliana (Mouse-ear cress), this protein is Putative defensin-like protein 230 (SCRL24).